A 433-amino-acid polypeptide reads, in one-letter code: Protein FAM98B (433 aa).

The segment at 303–433 is disordered; it reads GRVPDRGGRP…GGGGGGYRRY (131 aa). The span at 305 to 314 shows a compositional bias: basic and acidic residues; sequence VPDRGGRPNE. The span at 331-433 shows a compositional bias: gly residues; the sequence is GGGGRGGWGG…GGGGGGYRRY (103 aa).

The protein belongs to the FAM98 family. Homodimer. Component of the tRNA-splicing ligase complex. Interacts with FAM98A. As to expression, expressed strongly in colorectal cancer tissues compared to wild-type colon samples (at protein level). Expressed strongly in colorectal cancer tissues compared to wild-type colon samples.

It is found in the nucleus. It localises to the cytoplasm. Functionally, positively stimulates PRMT1-induced protein arginine dimethylated arginine methylation. The protein is Protein FAM98B (FAM98B) of Homo sapiens (Human).